A 410-amino-acid polypeptide reads, in one-letter code: Peptidase T (410 aa).

His78 contributes to the Zn(2+) binding site. Residue Asp80 is part of the active site. Asp140 is a Zn(2+) binding site. The active-site Proton acceptor is Glu173. The Zn(2+) site is built by Glu174, Asp196, and His379.

It belongs to the peptidase M20B family. Zn(2+) serves as cofactor.

It is found in the cytoplasm. It carries out the reaction Release of the N-terminal residue from a tripeptide.. Cleaves the N-terminal amino acid of tripeptides. This chain is Peptidase T, found in Pectobacterium carotovorum subsp. carotovorum (strain PC1).